The chain runs to 581 residues: 2-hydroxyacyl-CoA lyase 1 (581 aa).

Phosphoserine occurs at positions 4 and 6. E63 is a binding site for thiamine diphosphate. K354, K361, and K368 each carry N6-succinyllysine. The tract at residues 404 to 487 (TMDIGRTMLQ…IILLVVNNNG (84 aa)) is thiamine pyrophosphate binding. The Mg(2+) site is built by D458 and N485. The Microbody targeting signal signature appears at 579 to 581 (SNM).

It belongs to the TPP enzyme family. In terms of assembly, homotetramer. It depends on Mg(2+) as a cofactor. Thiamine diphosphate is required as a cofactor. As to expression, predominanly expressed in liver.

The protein localises to the peroxisome. The enzyme catalyses a 2-hydroxy-3-methyl fatty acyl-CoA = a 2-methyl-branched fatty aldehyde + formyl-CoA. It carries out the reaction an (R)-2-hydroxy-long-chain-fatty acyl-CoA = a long-chain fatty aldehyde + formyl-CoA. It catalyses the reaction 2-hydroxy-3-methylhexadecanoyl-CoA = 2-methylpentadecanal + formyl-CoA. The catalysed reaction is 2-hydroxyoctadecanoyl-CoA = heptadecanal + formyl-CoA. The enzyme catalyses 2-hydroxyphytanoyl-CoA = 2,6,10,14-tetramethylpentadecanal + formyl-CoA. The protein operates within lipid metabolism; fatty acid metabolism. Functionally, peroxisomal 2-OH acyl-CoA lyase involved in the cleavage (C1 removal) reaction in the fatty acid alpha-oxydation in a thiamine pyrophosphate (TPP)-dependent manner. Involved in the degradation of 3-methyl-branched fatty acids like phytanic acid and the shortening of 2-hydroxy long-chain fatty acids. Plays a significant role in the biosynthesis of heptadecanal in the liver. In Mus musculus (Mouse), this protein is 2-hydroxyacyl-CoA lyase 1 (Hacl1).